Here is a 285-residue protein sequence, read N- to C-terminus: Polyamine aminopropyltransferase (285 aa).

The PABS domain maps to 5–241 (QDWFTESYPD…GWWSATMAGK (237 aa)). Gln-35 lines the S-methyl-5'-thioadenosine pocket. Spermidine-binding residues include His-66 and Asp-90. S-methyl-5'-thioadenosine is bound by residues Asp-110 and 141-142 (DG). Asp-160 acts as the Proton acceptor in catalysis. Residue 160-163 (DSTD) participates in spermidine binding. Residue Pro-167 participates in S-methyl-5'-thioadenosine binding.

This sequence belongs to the spermidine/spermine synthase family. Homodimer or homotetramer.

It localises to the cytoplasm. The catalysed reaction is S-adenosyl 3-(methylsulfanyl)propylamine + putrescine = S-methyl-5'-thioadenosine + spermidine + H(+). It participates in amine and polyamine biosynthesis; spermidine biosynthesis; spermidine from putrescine: step 1/1. Catalyzes the irreversible transfer of a propylamine group from the amino donor S-adenosylmethioninamine (decarboxy-AdoMet) to putrescine (1,4-diaminobutane) to yield spermidine. This Methylococcus capsulatus (strain ATCC 33009 / NCIMB 11132 / Bath) protein is Polyamine aminopropyltransferase.